The following is a 423-amino-acid chain: Putative competence-damage inducible protein (423 aa).

Belongs to the CinA family.

This chain is Putative competence-damage inducible protein, found in Streptococcus equi subsp. zooepidemicus (strain H70).